Consider the following 511-residue polypeptide: Adenosine deaminase 2 (511 aa).

Positions M1–S29 are cleaved as a signal peptide. Residues I30 to N100 form a dimerization region. The Zn(2+) site is built by H112 and H114. Substrate is bound at residue D115. N127 carries N-linked (GlcNAc...) asparagine glycosylation. The PRB domain stretch occupies residues N127–N185. A disulfide bond links C137 and C159. N-linked (GlcNAc...) asparagine glycosylation is found at N174 and N185. Residues W204 to F211, H293, and G326 contribute to the substrate site. Residue H356 participates in Zn(2+) binding. Catalysis depends on E359, which acts as the Proton donor. A glycan (N-linked (GlcNAc...) asparagine) is linked at N378. Catalysis depends on H384, which acts as the Proton acceptor. Residue D441 participates in Zn(2+) binding. Residue D442 participates in substrate binding.

It belongs to the metallo-dependent hydrolases superfamily. Adenosine and AMP deaminases family. ADGF subfamily. Homodimer. Interacts with adenosine receptors. Binds heparin. Requires Zn(2+) as cofactor. Detected in blood plasma (at protein level). Widely expressed, with most abundant expression in human adult heart, lung, lymphoblasts, and placenta as well as fetal lung, liver, and kidney. In embryo, expressed in the outflow tract and atrium of the developing heart, the VII/VIII cranial nerve ganglion, and the notochord.

It localises to the secreted. The catalysed reaction is adenosine + H2O + H(+) = inosine + NH4(+). Its function is as follows. Adenosine deaminase that may contribute to the degradation of extracellular adenosine, a signaling molecule that controls a variety of cellular responses. Requires elevated adenosine levels for optimal enzyme activity. Binds to cell surfaces via proteoglycans and may play a role in the regulation of cell proliferation and differentiation, independently of its enzyme activity. The sequence is that of Adenosine deaminase 2 from Homo sapiens (Human).